Here is a 2210-residue protein sequence, read N- to C-terminus: Genome polyprotein (2210 aa).

The segment at 1–22 (MAPVVSRDRHRHKIPKPHQPAP) is disordered. Positions 426 to 585 (SSKIMELSTI…ADFLRQHPGV (160 aa)) constitute an SF3 helicase domain. 456-463 (GPPGHGKS) provides a ligand contact to ATP. O-(5'-phospho-RNA)-tyrosine is present on Y940. The Peptidase C24 domain occupies 991 to 1136 (GNNCEDLPLH…KVFTPITDAP (146 aa)). Catalysis depends on for 3CLpro activity residues H1025, D1039, and C1103. The region spanning 1379-1501 (DHCLELDYSK…TIPSHLTKSI (123 aa)) is the RdRp catalytic domain. The interval 1654–1686 (SDLIREGNMSDNKSTPEQQHESSRAMDAGATGA) is disordered.

Post-translationally, specific enzymatic cleavages by its own cysteine protease yield mature proteins. The protease cleaves itself from the nascent polyprotein autocatalytically. Precursor p41 can be cleaved by viral 3CLpro into protein p19 and VPg, or cleaved by host protease into protein p23/2 and protein p18. VPg is uridylylated by the polymerase and is covalently attached to the 5'-end of the polyadenylated genomic and subgenomic RNAs. This uridylylated form acts as a nucleotide-peptide primer for the polymerase.

Its subcellular location is the virion. It localises to the host cytoplasm. The enzyme catalyses a ribonucleoside 5'-triphosphate + H2O = a ribonucleoside 5'-diphosphate + phosphate + H(+). It catalyses the reaction Endopeptidase with a preference for cleavage when the P1 position is occupied by Glu-|-Xaa and the P1' position is occupied by Gly-|-Yaa.. It carries out the reaction RNA(n) + a ribonucleoside 5'-triphosphate = RNA(n+1) + diphosphate. Displays NTPase activity, but no helicase activity. Induces the formation of convoluted membranes derived from the host ER. These remodeled membranes probably form the viral factories that contain the replication complex. Together with NS2 and NS4, initiates the formation of the replication complex. Functionally, viral genome-linked protein is covalently linked to the 5'-end of the positive-strand, negative-strand genomic RNAs and subgenomic RNA. Acts as a genome-linked replication primer. May recruit ribosome to viral RNA thereby promoting viral proteins translation. Interacts with host translation initiation complex to allow the translation of viral proteins. Its function is as follows. Processes the polyprotein. 3CLpro-RdRp is first released by autocleavage, then all other proteins are cleaved. May cleave polyadenylate-binding protein thereby inhibiting cellular translation. In terms of biological role, replicates genomic and antigenomic RNA by recognizing replications specific signals. Also transcribes a subgenomic mRNA by initiating RNA synthesis internally on antigenomic RNA. This sgRNA codes for structural proteins. Catalyzes the covalent attachment VPg with viral RNAs. Capsid protein self assembles to form an icosahedral capsid with a T=3 symmetry, about 35 nm in diameter, and consisting of 180 capsid proteins. A smaller form of capsid with a diameter of 23 nm might be capsid proteins assembled as icosahedron with T=1 symmetry. The capsid encapsulate VP2 proteins and genomic or subgenomic RNA. Attaches virion to target cells by binding histo-blood group antigens, inducing endocytosis of the viral particle. Acidification of the endosome induces conformational change of capsid protein thereby injecting virus genomic RNA into host cytoplasm. In Bos taurus (Bovine), this protein is Genome polyprotein.